The chain runs to 429 residues: Tryptophan synthase beta chain 2 (429 aa).

The disordered stretch occupies residues 18-40 (NINPDLPSPLPEPKNPEGGKNIE). Lys110 is modified (N6-(pyridoxal phosphate)lysine).

Belongs to the TrpB family. Tetramer of two alpha and two beta chains. Pyridoxal 5'-phosphate is required as a cofactor.

It carries out the reaction (1S,2R)-1-C-(indol-3-yl)glycerol 3-phosphate + L-serine = D-glyceraldehyde 3-phosphate + L-tryptophan + H2O. Its pathway is amino-acid biosynthesis; L-tryptophan biosynthesis; L-tryptophan from chorismate: step 5/5. Functionally, the beta subunit is responsible for the synthesis of L-tryptophan from indole and L-serine. This Methanothermobacter thermautotrophicus (strain ATCC 29096 / DSM 1053 / JCM 10044 / NBRC 100330 / Delta H) (Methanobacterium thermoautotrophicum) protein is Tryptophan synthase beta chain 2 (trpB2).